The chain runs to 218 residues: MRQKYYIEAAARGLVGSCPGQARYLLWAYSSTHEDNSTFQETCPHCFQLLVLDNSRVRLKPKAKLTPKIQKLLNREARNYTLSFKETKLLRKYRDSASVLLITCRTCNRTVRHHGKSRSFLSALRSSRAASAASKASPKTPKRAAAGSTNISQSVHGSKGRSPSSTVRTPTSGQSTPICSSRNGSKRKKHFSQLKALLSQSASDKNPTLDFRHFLSSL.

Residue S126 is modified to Phosphoserine. Residues 130 to 146 are compositionally biased toward low complexity; the sequence is ASAASKASPKTPKRAAA. The segment at 130-192 is disordered; it reads ASAASKASPK…NGSKRKKHFS (63 aa). T140 bears the Phosphothreonine mark. The segment covering 147 to 156 has biased composition (polar residues); the sequence is GSTNISQSVH. Residues 161–172 are compositionally biased toward low complexity; the sequence is RSPSSTVRTPTS. The segment covering 173 to 183 has biased composition (polar residues); that stretch reads GQSTPICSSRN.

The protein belongs to the UPF0711 family.

This chain is UPF0711 protein C18orf21 homolog, found in Rattus norvegicus (Rat).